The primary structure comprises 560 residues: Alpha-keto-acid decarboxylase (560 aa).

Position 61 (Glu61) interacts with thiamine diphosphate. A thiamine pyrophosphate binding region spans residues 396 to 478; the sequence is TSFYGMADHR…VVVNNDGYTV (83 aa). 3 residues coordinate Mg(2+): Asp446, Asn473, and Gly475.

This sequence belongs to the TPP enzyme family. A metal cation serves as cofactor. Thiamine diphosphate is required as a cofactor.

In terms of biological role, decarboxylates branched-chain and aromatic alpha-keto acids to aldehydes. The sequence is that of Alpha-keto-acid decarboxylase (kdc) from Mycobacterium tuberculosis (strain CDC 1551 / Oshkosh).